The primary structure comprises 387 residues: Phosphoglycerate kinase (387 aa).

Substrate contacts are provided by residues 21–23 (DLN), Arg-36, 59–62 (HLGR), Arg-114, and Arg-147. ATP-binding positions include Lys-198, Glu-314, and 340-343 (GGDT).

The protein belongs to the phosphoglycerate kinase family. As to quaternary structure, monomer.

The protein resides in the cytoplasm. The catalysed reaction is (2R)-3-phosphoglycerate + ATP = (2R)-3-phospho-glyceroyl phosphate + ADP. Its pathway is carbohydrate degradation; glycolysis; pyruvate from D-glyceraldehyde 3-phosphate: step 2/5. The chain is Phosphoglycerate kinase from Erwinia tasmaniensis (strain DSM 17950 / CFBP 7177 / CIP 109463 / NCPPB 4357 / Et1/99).